A 397-amino-acid chain; its full sequence is MSKIKVEELTKIFGKKASKASSLLSQGKSKTDILKETGATIGVNKASFSVEEGEIFVIMGLSGSGKSTLVRLLNRLIEPTSGKIWLDGKELSSLNKKELLEVRRKSMSMVFQNFGLFPNRTINRNVEYGLEIQGMDKEEREKNAAESLALVGLAGYGDQYPSQLSGGMQQRVGLARALANNPDILLMDEAFSALDPLNRKDMQDQLLDLQDKMKKTIIFITHDLDEALRIGDHIMIMRDGSVVQTGSPEEILAHPANEYVEKFIEDVDRSKVYTASNVMIRPEIVNFEKDGPRVALKRMREAGTSSVFVVKRNRELVGIVHAAEVSKLVKENITSLETALHRDVPTTGLDTPLAEIMDTISTTTIPIAVTEDGKLKGIIIRGSVLAALSGNEVNVNA.

In terms of domain architecture, ABC transporter spans 28 to 264 (KSKTDILKET…PANEYVEKFI (237 aa)). 60 to 67 (GLSGSGKS) serves as a coordination point for ATP. 2 CBS domains span residues 279–335 (MIRP…NITS) and 340–395 (LHRD…EVNV).

This sequence belongs to the ABC transporter superfamily. The complex is composed of two ATP-binding proteins (GbuA), two transmembrane proteins (GbuB) and a solute-binding protein (GbuC).

The catalysed reaction is a quaternary ammonium(out) + ATP + H2O = a quaternary ammonium(in) + ADP + phosphate + H(+). With respect to regulation, the complex is activated by an osmotic gradient or by low temperature. Part of the ABC transporter complex GbuABC involved in glycine betaine uptake. Responsible for energy coupling to the transport system. Involved, with BetL and OpuC, in osmoprotection and cryoprotection of Listeria. Can also uptake carnitine when carnitine is abundant in the growth medium. The sequence is that of Glycine betaine/carnitine transport ATP-binding protein GbuA (gbuA) from Listeria monocytogenes serotype 1/2a (strain 10403S).